The chain runs to 412 residues: DnaJ homolog subfamily A member 2 (412 aa).

A J domain is found at 8-70 (KLYDILGVPP…EKRELYDRYG (63 aa)). An N6-acetyllysine modification is found at Lys-39. Ser-78 and Ser-123 each carry phosphoserine. The CR-type zinc finger occupies 130 to 214 (GKTTKLQLSK…CEGKKVIKEV (85 aa)). A Glycyl lysine isopeptide (Lys-Gly) (interchain with G-Cter in SUMO2) cross-link involves residue Lys-134. 2 residues coordinate Zn(2+): Cys-143 and Cys-146. One copy of the CXXCXGXG motif repeat lies at 143–150 (CSACSGQG). Residue Lys-152 is modified to N6-acetyllysine. Cys-159, Cys-162, Cys-186, Cys-189, Cys-202, and Cys-205 together coordinate Zn(2+). 3 CXXCXGXG motif repeats span residues 159–166 (CSACRGRG), 186–193 (CSDCNGEG), and 202–209 (CKKCEGKK). The segment at 365-412 (IGETEEVELQEFDSTRGSGGGQRREAYNDSSDEESSSHHGPGVQCAHQ) is disordered. The residue at position 391 (Tyr-391) is a Phosphotyrosine. Phosphoserine occurs at positions 394 and 395. A Cysteine methyl ester modification is found at Cys-409. Cys-409 is lipidated: S-farnesyl cysteine. A propeptide spans 410–412 (AHQ) (removed in mature form).

The protein resides in the membrane. Co-chaperone of Hsc70. Stimulates ATP hydrolysis and the folding of unfolded proteins mediated by HSPA1A/B (in vitro). The polypeptide is DnaJ homolog subfamily A member 2 (Dnaja2) (Mus musculus (Mouse)).